Reading from the N-terminus, the 267-residue chain is MIRDITIGQYVPGNSLLHKADPRTKIILTFIMMIFIFLINTYWGYLLLTLFTAITVVSSNIPVKFVLKGLKPILFIVVFAGIINIFMIKGTVIWSWGFLSITYEGINVAIKMAIRLFLLIITASLLTYTTTPIALTDAIENLLAPLKRIKVPVHEIAMMMTIALRFIPTLLDETDKIIKAQSSRGADFDSGNMIERAKSFIPVLIPLFISAFRRADELATAMEARCYRGSEGRTRMKQLRFTRFDVLVTGITVVFMTWVILMEYVFF.

The next 5 helical transmembrane spans lie at 26 to 46 (IILT…WGYL), 73 to 93 (ILFI…GTVI), 116 to 136 (LFLL…IALT), 151 to 171 (VPVH…PTLL), and 247 to 267 (LVTG…YVFF).

Belongs to the energy-coupling factor EcfT family. In terms of assembly, forms a stable energy-coupling factor (ECF) transporter complex composed of 2 membrane-embedded substrate-binding proteins (S component), 2 ATP-binding proteins (A component) and 2 transmembrane proteins (T component). May be able to interact with more than 1 S component at a time.

It localises to the cell membrane. Transmembrane (T) component of an energy-coupling factor (ECF) ABC-transporter complex. Unlike classic ABC transporters this ECF transporter provides the energy necessary to transport a number of different substrates. The chain is Energy-coupling factor transporter transmembrane protein EcfT from Ruminiclostridium cellulolyticum (strain ATCC 35319 / DSM 5812 / JCM 6584 / H10) (Clostridium cellulolyticum).